The sequence spans 640 residues: Chaperone protein DnaK (640 aa).

Position 196 is a phosphothreonine; by autocatalysis (Thr-196). Over residues 547–569 (GDKIPSDKRPALEGALEKLKDAT) the composition is skewed to basic and acidic residues. Disordered regions lie at residues 547 to 575 (GDKIPSDKRPALEGALEKLKDATKNGTTE) and 595 to 640 (LYQA…GNGK). Residues 603-615 (TNASEPTQNTDGS) are compositionally biased toward polar residues. Over residues 625–634 (GEVENAEFEV) the composition is skewed to acidic residues.

The protein belongs to the heat shock protein 70 family.

Acts as a chaperone. In Chlorobium phaeobacteroides (strain DSM 266 / SMG 266 / 2430), this protein is Chaperone protein DnaK.